A 236-amino-acid chain; its full sequence is Pyridoxal 5'-phosphate synthase subunit PdxT (236 aa).

61–63 contacts L-glutamine; the sequence is GES. The active-site Nucleophile is the cysteine 93. L-glutamine-binding positions include arginine 127 and 163 to 164; that span reads IR. Residues histidine 215 and glutamate 217 each act as charge relay system in the active site.

This sequence belongs to the glutaminase PdxT/SNO family. In terms of assembly, in the presence of PdxS, forms a dodecamer of heterodimers. Only shows activity in the heterodimer.

It catalyses the reaction aldehydo-D-ribose 5-phosphate + D-glyceraldehyde 3-phosphate + L-glutamine = pyridoxal 5'-phosphate + L-glutamate + phosphate + 3 H2O + H(+). The enzyme catalyses L-glutamine + H2O = L-glutamate + NH4(+). The protein operates within cofactor biosynthesis; pyridoxal 5'-phosphate biosynthesis. In terms of biological role, catalyzes the hydrolysis of glutamine to glutamate and ammonia as part of the biosynthesis of pyridoxal 5'-phosphate. The resulting ammonia molecule is channeled to the active site of PdxS. This chain is Pyridoxal 5'-phosphate synthase subunit PdxT, found in Arthrobacter sp. (strain FB24).